Reading from the N-terminus, the 372-residue chain is Putative actin-27 (372 aa).

This sequence belongs to the actin family.

It localises to the cytoplasm. It is found in the cytoskeleton. It catalyses the reaction ATP + H2O = ADP + phosphate + H(+). In terms of biological role, actins are highly conserved proteins that are involved in various types of cell motility and are ubiquitously expressed in all eukaryotic cells. Multiple isoforms are involved in various cellular functions such as cytoskeleton structure, cell mobility, chromosome movement and muscle contraction. The sequence is that of Putative actin-27 (act27) from Dictyostelium discoideum (Social amoeba).